A 204-amino-acid polypeptide reads, in one-letter code: Urease accessory protein UreG (204 aa).

G11–T18 is a GTP binding site.

Belongs to the SIMIBI class G3E GTPase family. UreG subfamily. In terms of assembly, homodimer. UreD, UreF and UreG form a complex that acts as a GTP-hydrolysis-dependent molecular chaperone, activating the urease apoprotein by helping to assemble the nickel containing metallocenter of UreC. The UreE protein probably delivers the nickel.

The protein resides in the cytoplasm. Functionally, facilitates the functional incorporation of the urease nickel metallocenter. This process requires GTP hydrolysis, probably effectuated by UreG. This chain is Urease accessory protein UreG, found in Staphylococcus saprophyticus subsp. saprophyticus (strain ATCC 15305 / DSM 20229 / NCIMB 8711 / NCTC 7292 / S-41).